A 4047-amino-acid polypeptide reads, in one-letter code: Cubilin homolog (4047 aa).

Positions 1-22 (MIPNLQLFLSLILFGLLNHVSS) are cleaved as a signal peptide. N-linked (GlcNAc...) asparagine glycans are attached at residues Asn56, Asn92, and Asn127. Positions 168–205 (AINACDPNKCSNGGTCIPSFGAKFTCLCPPHFTGTTCE) constitute an EGF-like 1 domain. 26 cysteine pairs are disulfide-bonded: Cys172–Cys183, Cys177–Cys193, Cys195–Cys204, Cys211–Cys227, Cys221–Cys236, Cys238–Cys247, Cys310–Cys321, Cys315–Cys330, Cys333–Cys344, Cys350–Cys363, Cys357–Cys372, Cys375–Cys386, Cys392–Cys403, Cys397–Cys418, Cys420–Cys434, Cys442–Cys453, Cys447–Cys463, Cys465–Cys474, Cys480–Cys491, Cys485–Cys500, Cys502–Cys511, Cys518–Cys544, Cys577–Cys601, Cys645–Cys667, Cys696–Cys719, and Cys769–Cys801. In terms of domain architecture, EGF-like 2; calcium-binding spans 207-248 (DIDECSVYNGTTAGCQNNGTCINNRGGFECQCQSGYHGSLCQ). 2 N-linked (GlcNAc...) asparagine glycosylation sites follow: Asn215 and Asn224. An EGF-like 3; calcium-binding domain is found at 306–345 (DVNECESNPCHPGVDCINLPGSFVCSGCPKGYKTDGNVCI). An EGF-like 4; calcium-binding domain is found at 346 to 387 (DVNECEGEIRVCSPLSKCHNTLGSYYCDSCPTGYSGDGGNCV). EGF-like domains lie at 388-435 (KDDS…EGCV), 438-475 (ASNV…KFCE), and 476-512 (KTSP…RACE). CUB domains lie at 518–641 (CGSH…WETV), 645–763 (CGYR…YKFT), 769–934 (CGAE…YEML), 934–1061 (LCEK…YKTS), 1065–1182 (CGGV…FEAV), 1188–1300 (CDFT…YETI), 1304–1427 (CGGR…FTTL), 1428–1558 (CNGI…WNTL), 1560–1680 (CSRD…VEFV), and 1691–1841 (CGQV…MIPK). Residues Asn528, Asn537, and Asn583 are each glycosylated (N-linked (GlcNAc...) asparagine). N-linked (GlcNAc...) asparagine glycosylation is found at Asn775, Asn806, and Asn811. Cys877 and Cys896 are disulfide-bonded. Asn942 is a glycosylation site (N-linked (GlcNAc...) asparagine). 3 disulfide bridges follow: Cys1065/Cys1091, Cys1120/Cys1145, and Cys1188/Cys1211. Asn1133 carries an N-linked (GlcNAc...) asparagine glycan. Residue Asn1229 is glycosylated (N-linked (GlcNAc...) asparagine). Cys1234 and Cys1262 are joined by a disulfide. The N-linked (GlcNAc...) asparagine glycan is linked to Asn1294. Cys1304 and Cys1330 are joined by a disulfide. N-linked (GlcNAc...) asparagine glycosylation occurs at Asn1353. Disulfide bonds link Cys1428–Cys1455, Cys1488–Cys1522, and Cys1560–Cys1586. Residue Asn1513 is glycosylated (N-linked (GlcNAc...) asparagine). N-linked (GlcNAc...) asparagine glycans are attached at residues Asn1613, Asn1631, Asn1648, and Asn1674. A disulfide bond links Cys1614 and Cys1641. A disulfide bond links Cys1691 and Cys1720. Residues Asn1762, Asn1782, Asn1866, and Asn1890 are each glycosylated (N-linked (GlcNAc...) asparagine). Residues Cys1955 and Cys1979 are joined by a disulfide bond. The region spanning 1955–2083 (CGGEVRHSQG…PLFKARYEKV (129 aa)) is the CUB 11 domain. Asn2005, Asn2016, and Asn2017 each carry an N-linked (GlcNAc...) asparagine glycan. A disulfide bridge links Cys2006 with Cys2027. The segment at 2052-2071 (ASDGNDDDDDTPDIDQQDSN) is disordered. Acidic residues predominate over residues 2055–2067 (GNDDDDDTPDIDQ). Residue Asn2193 is glycosylated (N-linked (GlcNAc...) asparagine). 2 disulfide bridges follow: Cys2207–Cys2238 and Cys2265–Cys2295. CUB domains follow at residues 2207–2334 (CGGD…YRLT), 2335–2463 (CNSF…IKEQ), 2467–2588 (CPSG…YGIA), 2590–2717 (CGGT…VTMS), and 2721–2859 (CGGR…YMAI). 2 N-linked (GlcNAc...) asparagine glycosylation sites follow: Asn2301 and Asn2305. 2 disulfide bridges follow: Cys2335-Cys2368 and Cys2395-Cys2424. Asn2434 carries N-linked (GlcNAc...) asparagine glycosylation. Disulfide bonds link Cys2467–Cys2498 and Cys2590–Cys2619. 4 N-linked (GlcNAc...) asparagine glycosylation sites follow: Asn2599, Asn2645, Asn2657, and Asn2692. The cysteines at positions 2646 and 2668 are disulfide-linked. Cystine bridges form between Cys2721/Cys2747 and Cys2786/Cys2809. N-linked (GlcNAc...) asparagine glycosylation is found at Asn2811, Asn2845, Asn2875, and Asn2988. Disulfide bonds link Cys2996–Cys3025, Cys3052–Cys3074, Cys3127–Cys3154, and Cys3181–Cys3217. CUB domains follow at residues 2996–3121 (CGGV…YEFL), 3127–3254 (CGYH…WEAE), 3255–3385 (CGAI…YSIN), 3387–3508 (CGDN…VISS), 3515–3641 (CGGK…YSIV), 3645–3783 (CGGW…YNIL), and 3786–3900 (CNRT…YYTV). Asn3235 carries N-linked (GlcNAc...) asparagine glycosylation. 3 disulfides stabilise this stretch: Cys3255/Cys3281, Cys3315/Cys3335, and Cys3387/Cys3418. N-linked (GlcNAc...) asparagine glycans are attached at residues Asn3421 and Asn3461. Disulfide bonds link Cys3445-Cys3468 and Cys3515-Cys3544. N-linked (GlcNAc...) asparagine glycosylation occurs at Asn3635. 2 disulfides stabilise this stretch: Cys3645-Cys3680 and Cys3708-Cys3742. 5 N-linked (GlcNAc...) asparagine glycosylation sites follow: Asn3770, Asn3787, Asn3812, Asn3858, and Asn3930. Cystine bridges form between Cys3786/Cys3815 and Cys3845/Cys3863.

The protein localises to the secreted. Functionally, cotransporter which plays a role in lipoprotein, vitamin and iron metabolism, by facilitating their uptake. In Caenorhabditis elegans, this protein is Cubilin homolog.